The chain runs to 424 residues: MAIPFMETVVGFMIVMYIFETYLDLRQLTALKLPTLPKTLVGVISQEKFEKSRAYSLDKSYFHFVHEFVTILMDSAILFFGILPWFWKMSGAVLPRLGLDPENEILHTLSFLAGVMTWSQITDLPFSLYSTFVIESRHGFNKQTIWMFIRDMIKGTFLSVILGPPIVAAIIFIVQKGGPYLAIYLWAFMFILSLVMMTIYPVLIAPLFNKFTPLPDGDLREKIEKLASSLKFPLKKLFVVDGSTRSSHSNAYMYGFFKNKRIVLYDTLIQQCKNEDEIVAVIAHELGHWKLNHTTYSFIAVQILAFLQFGGYTLVRNSTDLFRSFGFDTQPVLIGLIIFQHTVIPLQHLVSFGLNLVSRAFEFQADAFAVKLGYAKDLRPALVKLQEENLSAMNTDPLYSAYHYSHPPLVERLRAIDGEDKKTD.

The next 5 membrane-spanning stretches (helical) occupy residues 3–23 (IPFMETVVGFMIVMYIFETYL), 67–87 (EFVTILMDSAILFFGILPWFW), 109–129 (LSFLAGVMTWSQITDLPFSLY), 155–175 (GTFLSVILGPPIVAAIIFIVQ), and 185–205 (LWAFMFILSLVMMTIYPVLIA). Position 284 (His-284) interacts with Zn(2+). The active site involves Glu-285. His-288 provides a ligand contact to Zn(2+). The next 2 membrane-spanning stretches (helical) occupy residues 295-315 (TYSFIAVQILAFLQFGGYTLV) and 332-352 (VLIGLIIFQHTVIPLQHLVSF). Glu-362 lines the Zn(2+) pocket. Residue Asp-366 is the Proton donor of the active site.

Belongs to the peptidase M48A family. It depends on Zn(2+) as a cofactor. Expressed in leaves, stems and flowers.

The protein resides in the endoplasmic reticulum membrane. The enzyme catalyses Hydrolyzes the peptide bond -P2-(S-farnesyl or geranylgeranyl)C-P1'-P2'-P3'-COOH where P1' and P2' are amino acids with aliphatic side chains and P3' is any C-terminal residue.. Its function is as follows. Proteolytically removes the C-terminal three residues of farnesylated proteins. The substrate specificity is only partially overlapping with that of FACE2. The sequence is that of CAAX prenyl protease 1 homolog (FACE1) from Arabidopsis thaliana (Mouse-ear cress).